Here is a 562-residue protein sequence, read N- to C-terminus: Arginine--tRNA ligase (562 aa).

The 'HIGH' region signature appears at 122 to 132; that stretch reads PNIAKDMHVGH.

Belongs to the class-I aminoacyl-tRNA synthetase family. Monomer.

It localises to the cytoplasm. The enzyme catalyses tRNA(Arg) + L-arginine + ATP = L-arginyl-tRNA(Arg) + AMP + diphosphate. This Chlamydia abortus (strain DSM 27085 / S26/3) (Chlamydophila abortus) protein is Arginine--tRNA ligase.